A 473-amino-acid chain; its full sequence is MKTLYSLRRFYPVETLFNGTLALAGRDQETTGFAWWAGNARLINLSGKLLGAHVAHAGLIVFWAGAMNLFEVAHFVPEKPMYEQGLILLPHLATLGWGVGPGGEVIDTFPYFVSGVLHLISSAVLGFGGIYHALLGPETLEESFPFFGYVWKDRNKMTTILGIHLILLGIGAFLLVLKALYFGGVYDTWAPGGGDVRKITNLTLSPSVIFGYLLKSPFGGEGWIVSVDDLEDIIGGHVWLGSICILGGIWHILTKPFAWARRAFVWSGEAYLSYSLGALSVFGFIACCFVWFNNTAYPSEFYGPTGPEASQAQAFTFLVRDQRLGANVGSAQGPTGLGKYLMRSPTGEVIFGGETMRFWDLRAPWLEPLRGPNGLDLGRLKKDIQPWQERRSAEYMTHAPLGSLNSVGGVATEINAVNYVSPRSWLATSHFVLGFFLFVGHLWHAGRARAAAAGFEKGIDRDLEPVLSMTPLS.

A propeptide spanning residues methionine 1–glutamate 14 is cleaved from the precursor. Residue threonine 15 is modified to N-acetylthreonine. Threonine 15 is modified (phosphothreonine). 5 consecutive transmembrane segments (helical) span residues leucine 69 to alanine 93, leucine 134 to asparagine 155, lysine 178 to threonine 200, lysine 255 to serine 275, and tryptophan 291 to alanine 312. Residue glutamate 367 coordinates [CaMn4O5] cluster. Residues arginine 447–proline 471 form a helical membrane-spanning segment.

The protein belongs to the PsbB/PsbC family. PsbC subfamily. PSII is composed of 1 copy each of membrane proteins PsbA, PsbB, PsbC, PsbD, PsbE, PsbF, PsbH, PsbI, PsbJ, PsbK, PsbL, PsbM, PsbT, PsbX, PsbY, PsbZ, Psb30/Ycf12, at least 3 peripheral proteins of the oxygen-evolving complex and a large number of cofactors. It forms dimeric complexes. Binds multiple chlorophylls and provides some of the ligands for the Ca-4Mn-5O cluster of the oxygen-evolving complex. It may also provide a ligand for a Cl- that is required for oxygen evolution. PSII binds additional chlorophylls, carotenoids and specific lipids. is required as a cofactor.

The protein resides in the plastid. It localises to the chloroplast thylakoid membrane. One of the components of the core complex of photosystem II (PSII). It binds chlorophyll and helps catalyze the primary light-induced photochemical processes of PSII. PSII is a light-driven water:plastoquinone oxidoreductase, using light energy to abstract electrons from H(2)O, generating O(2) and a proton gradient subsequently used for ATP formation. The polypeptide is Photosystem II CP43 reaction center protein (Dioscorea elephantipes (Elephant's foot yam)).